Consider the following 175-residue polypeptide: Large ribosomal subunit protein uL10 (175 aa).

Belongs to the universal ribosomal protein uL10 family. In terms of assembly, part of the ribosomal stalk of the 50S ribosomal subunit. The N-terminus interacts with L11 and the large rRNA to form the base of the stalk. The C-terminus forms an elongated spine to which L12 dimers bind in a sequential fashion forming a multimeric L10(L12)X complex.

In terms of biological role, forms part of the ribosomal stalk, playing a central role in the interaction of the ribosome with GTP-bound translation factors. This Halorhodospira halophila (strain DSM 244 / SL1) (Ectothiorhodospira halophila (strain DSM 244 / SL1)) protein is Large ribosomal subunit protein uL10.